A 251-amino-acid polypeptide reads, in one-letter code: Cyclohexanol dehydrogenase (251 aa).

NAD(+)-binding residues include Asp42, Asn95, Tyr161, Lys165, Ile194, and Thr196. Catalysis depends on Tyr161, which acts as the Proton acceptor.

Belongs to the short-chain dehydrogenases/reductases (SDR) family.

It carries out the reaction cyclohexanol + NAD(+) = cyclohexanone + NADH + H(+). Functionally, catalyzes the oxidation of cyclohexanol to cyclohexanone. Required for the conversion of cyclohexanol to adipic acid. This is Cyclohexanol dehydrogenase from Acinetobacter sp. (strain SE19).